The sequence spans 310 residues: Putative S-adenosyl-L-methionine-dependent methyltransferase Mvan_1346 (310 aa).

S-adenosyl-L-methionine-binding positions include aspartate 136 and 165–166 (DL).

The protein belongs to the UPF0677 family.

Functionally, exhibits S-adenosyl-L-methionine-dependent methyltransferase activity. The polypeptide is Putative S-adenosyl-L-methionine-dependent methyltransferase Mvan_1346 (Mycolicibacterium vanbaalenii (strain DSM 7251 / JCM 13017 / BCRC 16820 / KCTC 9966 / NRRL B-24157 / PYR-1) (Mycobacterium vanbaalenii)).